A 438-amino-acid polypeptide reads, in one-letter code: MQVTLEKKEGIHCSLLIEVPANEIDSVVSKEINRTAKTIKMDGFRPGKVPAGMVKKKYGEQIRMEVISDLIPQKYSKAIQDEKLAVAGIEVELKENKEGQPLKFVANLELFPEFEVTGFEKIEVQKPVVELTDKEVKQMIDNLRKQFATFSEVYKVVEKDDKVTIDFVGKKDGEAFEGGTANDIDVIIGSGQMIPGFEDGIIGMKKGEQKTITVTFPQDYQNKDLAGAETTFDITVKKIQQAELPEVNDEFVKKFGVKGGVDTFENEIKENMQRELKFILQRKVKDQVFKGLREIAKFETPKSLIKREIDAAKQNLLKQMGGAKGFDVNQLPDNLFEANAKQKVETSLILDSIMNSQEFKAEEAEVESLLDELVQAYEEPEKTKEQIKKNDKEIANLKALVIENKLTDWVLEQAKVTEKTEDFFEVIKENMQAQQAGF.

Residues 160-245 (DDKVTIDFVG…VKKIQQAELP (86 aa)) form the PPIase FKBP-type domain.

The protein belongs to the FKBP-type PPIase family. Tig subfamily.

It localises to the cytoplasm. The catalysed reaction is [protein]-peptidylproline (omega=180) = [protein]-peptidylproline (omega=0). In terms of biological role, involved in protein export. Acts as a chaperone by maintaining the newly synthesized protein in an open conformation. Functions as a peptidyl-prolyl cis-trans isomerase. This Francisella tularensis subsp. holarctica (strain LVS) protein is Trigger factor.